Here is a 70-residue protein sequence, read N- to C-terminus: Large ribosomal subunit protein eL24 (70 aa).

Zn(2+) contacts are provided by Cys6, Cys9, Cys32, and Cys36. A C4-type zinc finger spans residues 6-36 (CSYCGRPIPPGYGIMYVRVDGVVLRFCSRRC).

This sequence belongs to the eukaryotic ribosomal protein eL24 family. Part of the 50S ribosomal subunit. Forms a cluster with proteins L3 and L14. Zn(2+) serves as cofactor.

In terms of biological role, binds to the 23S rRNA. The sequence is that of Large ribosomal subunit protein eL24 from Caldivirga maquilingensis (strain ATCC 700844 / DSM 13496 / JCM 10307 / IC-167).